We begin with the raw amino-acid sequence, 385 residues long: Transcription termination factor 2, mitochondrial (385 aa).

The N-terminal 35 residues, 1–35 (MPWRLPTGHQLCRLCLLRKPRPALKIKPSSACVTY), are a transit peptide targeting the mitochondrion.

This sequence belongs to the mTERF family. As to quaternary structure, monomer.

It localises to the mitochondrion matrix. It is found in the mitochondrion nucleoid. Its function is as follows. Binds mitochondrial DNA and plays a role in the regulation of transcription of mitochondrial mRNA and rRNA species. The protein is Transcription termination factor 2, mitochondrial (Mterf2) of Mus musculus (Mouse).